We begin with the raw amino-acid sequence, 129 residues long: uncharacterized protein (129 aa).

This sequence belongs to the asfivirus C129R family.

The protein localises to the virion. Functionally, plays a role in the inhibition of type I interferon signaling pathway. Mechanistically, specifically interacts with 2',3'-cGAMP and cleaves it via its phosphodiesterase activity. In turn, prevents 2',3'-cGAMP interaction with host ER-resident STING1 leading to inhibition of downstream signaling pathway and type I interferon production. This is an uncharacterized protein from Ornithodoros (relapsing fever ticks).